Reading from the N-terminus, the 100-residue chain is NADH-quinone oxidoreductase subunit K (100 aa).

Transmembrane regions (helical) follow at residues 4–24, 28–48, and 60–80; these read LTHG…GLVI, LLFM…AFVV, and VMYI…LALL.

This sequence belongs to the complex I subunit 4L family. As to quaternary structure, NDH-1 is composed of 13 different subunits. Subunits NuoA, H, J, K, L, M, N constitute the membrane sector of the complex.

It is found in the cell inner membrane. The enzyme catalyses a quinone + NADH + 5 H(+)(in) = a quinol + NAD(+) + 4 H(+)(out). Functionally, NDH-1 shuttles electrons from NADH, via FMN and iron-sulfur (Fe-S) centers, to quinones in the respiratory chain. The immediate electron acceptor for the enzyme in this species is believed to be ubiquinone. Couples the redox reaction to proton translocation (for every two electrons transferred, four hydrogen ions are translocated across the cytoplasmic membrane), and thus conserves the redox energy in a proton gradient. The sequence is that of NADH-quinone oxidoreductase subunit K from Salmonella agona (strain SL483).